The following is a 658-amino-acid chain: Probable replication factor A 73 kDa subunit (658 aa).

Disordered regions lie at residues 134 to 155 and 169 to 222; these read PEVKPRSHSGNPAEHHGYRPNI and SEFQ…TERG. The OB DNA-binding region spans 236-326; that stretch reads FRIHGMVSRK…TLRNDSVVEA (91 aa). The C4-type zinc-finger motif lies at 518–539; it reads CASEGCQKKVIESDGEYRCEKC.

This sequence belongs to the replication factor A protein 1 family. In terms of assembly, component of the heterotrimeric canonical replication protein A complex (RPA).

Its subcellular location is the nucleus. Functionally, as part of the heterotrimeric replication protein A complex (RPA/RP-A), binds and stabilizes single-stranded DNA intermediates, that form during DNA replication or upon DNA stress. It prevents their reannealing and in parallel, recruits and activates different proteins and complexes involved in DNA metabolism. Thereby, it plays an essential role both in DNA replication and the cellular response to DNA damage. In Caenorhabditis briggsae, this protein is Probable replication factor A 73 kDa subunit.